A 189-amino-acid chain; its full sequence is MLSDFFNNLASFFSNIFSLFEGKKQTRILMIGLDGAGKSTLLYKLKLGDIVSTVPTIGFNVETIEYKNLSMTVWDVGGQYKIRALWKHYYHGTNAIIFVVDSTDRERMDEVKEEIDTLLIQEELKGIQILIFANKQDMNNAMNTSEIVDSLNLNSIKDRKWYVQPCSAIKSPHGIYEGFDWVANSLNNK.

Residues D34 to T40, D75 to Q79, and N134 to D137 each bind GTP.

The protein belongs to the small GTPase superfamily. Arf family.

Its subcellular location is the golgi apparatus. GTP-binding protein that may be involved in protein trafficking. May modulate vesicle budding and uncoating within the Golgi apparatus. In Dictyostelium discoideum (Social amoeba), this protein is ADP-ribosylation factor H (arrH).